Here is a 502-residue protein sequence, read N- to C-terminus: Alpha-ketoglutarate-dependent dioxygenase FTO (502 aa).

Residues 32-324 (TPKDDEFYQQ…SSTHRVAECS (293 aa)) are fe2OG dioxygenase domain. Positions 96 and 108 each coordinate substrate. Residue Asn-202 participates in 2-oxoglutarate binding. Residues 210–221 (PYLKEEPYFGMG) form a loop L1; predicted to block binding of double-stranded DNA or RNA region. Lys-213 carries the N6-acetyllysine modification. Fe cation contacts are provided by His-228 and Asp-230. 228–231 (HHDE) lines the substrate pocket. 2-oxoglutarate is bound at residue Tyr-292. A Fe cation-binding site is contributed by His-304. 2-oxoglutarate is bound by residues 313 to 315 (RFS), Thr-317, and Arg-319.

Belongs to the fto family. As to quaternary structure, monomer. May also exist as homodimer. Fe(2+) serves as cofactor. As to expression, ubiquitous. Detected in brain, brain cortex, hypothalamus, cerebellum, liver, pancreas, heart, kidney, white adipose tissue and skeletal muscle. Most abundant in the brain, particularly in hypothalamic nuclei governing energy balance.

The protein resides in the nucleus. It is found in the nucleus speckle. Its subcellular location is the cytoplasm. The enzyme catalyses a 5'-end (N(7)-methyl 5'-triphosphoguanosine)-(N(6),2'-O-dimethyladenosine) in mRNA + 2-oxoglutarate + O2 = a 5'-end (N(7)-methyl 5'-triphosphoguanosine)-(2'-O-methyladenosine) in mRNA + formaldehyde + succinate + CO2. It carries out the reaction an N(6)-methyladenosine in mRNA + 2-oxoglutarate + O2 = an adenosine in mRNA + formaldehyde + succinate + CO2. It catalyses the reaction N(6)-methyladenosine in U6 snRNA + 2-oxoglutarate + O2 = adenosine in U6 snRNA + formaldehyde + succinate + CO2. The catalysed reaction is a 5'-end (N(7)-methyl 5'-triphosphoguanosine)-(N(6),2'-O-dimethyladenosine) in U6 snRNA + 2-oxoglutarate + O2 = a 5'-end (N(7)-methyl 5'-triphosphoguanosine)-(2'-O-methyladenosine) in U6 snRNA + formaldehyde + succinate + CO2. The enzyme catalyses an N(1)-methyladenosine in tRNA + 2-oxoglutarate + O2 = an adenosine in tRNA + formaldehyde + succinate + CO2. With respect to regulation, activated by ascorbate. Inhibited by N-oxalylglycine, fumarate and succinate. In terms of biological role, RNA demethylase that mediates oxidative demethylation of different RNA species, such as mRNAs, tRNAs and snRNAs, and acts as a regulator of fat mass, adipogenesis and energy homeostasis. Specifically demethylates N(6)-methyladenosine (m6A) RNA, the most prevalent internal modification of messenger RNA (mRNA) in higher eukaryotes. M6A demethylation by FTO affects mRNA expression and stability. Also able to demethylate m6A in U6 small nuclear RNA (snRNA). Mediates demethylation of N(6),2'-O-dimethyladenosine cap (m6A(m)), by demethylating the N(6)-methyladenosine at the second transcribed position of mRNAs and U6 snRNA. Demethylation of m6A(m) in the 5'-cap by FTO affects mRNA stability by promoting susceptibility to decapping. Also acts as a tRNA demethylase by removing N(1)-methyladenine from various tRNAs. Has no activity towards 1-methylguanine. Has no detectable activity towards double-stranded DNA. Also able to repair alkylated DNA and RNA by oxidative demethylation: demethylates single-stranded RNA containing 3-methyluracil, single-stranded DNA containing 3-methylthymine and has low demethylase activity towards single-stranded DNA containing 1-methyladenine or 3-methylcytosine. Ability to repair alkylated DNA and RNA is however unsure in vivo. Involved in the regulation of fat mass, adipogenesis and body weight, thereby contributing to the regulation of body size and body fat accumulation. Involved in the regulation of thermogenesis and the control of adipocyte differentiation into brown or white fat cells. Regulates activity of the dopaminergic midbrain circuitry via its ability to demethylate m6A in mRNAs. The protein is Alpha-ketoglutarate-dependent dioxygenase FTO of Mus musculus (Mouse).